We begin with the raw amino-acid sequence, 253 residues long: 5'-nucleotidase SurE (253 aa).

4 residues coordinate a divalent metal cation: Asp8, Asp9, Ser40, and Asn93.

This sequence belongs to the SurE nucleotidase family. Requires a divalent metal cation as cofactor.

It localises to the cytoplasm. It carries out the reaction a ribonucleoside 5'-phosphate + H2O = a ribonucleoside + phosphate. Functionally, nucleotidase that shows phosphatase activity on nucleoside 5'-monophosphates. The chain is 5'-nucleotidase SurE from Haemophilus ducreyi (strain 35000HP / ATCC 700724).